Reading from the N-terminus, the 92-residue chain is Small ribosomal subunit protein bS20 (92 aa).

A disordered region spans residues 1–25; it reads MANSAQARKRARQAAKANSHNSALR.

This sequence belongs to the bacterial ribosomal protein bS20 family.

Binds directly to 16S ribosomal RNA. The chain is Small ribosomal subunit protein bS20 from Burkholderia mallei (strain NCTC 10247).